The sequence spans 219 residues: Germin-like protein subfamily 2 member 2 (219 aa).

A signal peptide spans 1-22 (MMNSRISIIIALSCIMITSIRA). A disulfide bond links C32 and C47. N-linked (GlcNAc...) asparagine glycosylation is found at N52 and N70. The 151-residue stretch at 59–209 (FFAGISKPAV…TFQVGSKMVD (151 aa)) folds into the Cupin type-1 domain. Positions 109, 111, 116, and 155 each coordinate Mn(2+).

This sequence belongs to the germin family. Oligomer (believed to be a pentamer but probably hexamer).

It is found in the secreted. Its subcellular location is the extracellular space. It localises to the apoplast. May play a role in plant defense. Probably has no oxalate oxidase activity even if the active site is conserved. This Arabidopsis thaliana (Mouse-ear cress) protein is Germin-like protein subfamily 2 member 2.